The following is a 300-amino-acid chain: Oxidoreductase BOA1 (300 aa).

It belongs to the NmrA-type oxidoreductase family. Isoflavone reductase subfamily.

It participates in polyketide biosynthesis. Its function is as follows. Oxidoreductase; part of the gene cluster A that mediates the biosynthesis of botcinic acid and its botcinin derivatives, acetate-derived polyketides that contribute to virulence when combined with the sesquiterpene botrydial. Botcinic acid and its derivatives have been shown to induce chlorosis and necrosis during host plant infection, but also have antifungal activities. Two polyketide synthases, BOA6 and BOA9, are involved in the biosynthesis of botcinins. BOA6 mediates the formation of the per-methylated tetraketide core by condensation of four units of malonyl-CoA with one unit of acetyl-CoA, which would be methylated in activated methylene groups to yield a bicyclic acid intermediate that could then either be converted to botrylactone derivatives or lose the starter acetate unit through a retro-Claisen type C-C bond cleavage to yield botcinin derivatives. The second polyketide synthase, BOA9, is probably required for the biosynthesis of the tetraketide side chain of botcinins. The methyltransferase (MT) domain within BOA6 is probably responsible for the incorporation of four methyl groups. The trans-enoyl reductase BOA5 might take over the enoyl reductase function of BOA6 that misses an ER domain. The monooxygenases BOA2, BOA3 and BOA4 might be involved in further hydroxylations at C4, C5 and C8, whereas BOA7, close to BOA9, could potentially be involved in the hydroxylation at C4 in the side chain of botcinins. The chain is Oxidoreductase BOA1 from Botryotinia fuckeliana (strain B05.10) (Noble rot fungus).